Here is a 65-residue protein sequence, read N- to C-terminus: uncharacterized protein (65 aa).

2 consecutive transmembrane segments (helical) span residues 12-31 and 41-63; these read IVKW…LIVV and LVAR…AIIV.

Its subcellular location is the cell membrane. This is an uncharacterized protein from Halalkalibacterium halodurans (strain ATCC BAA-125 / DSM 18197 / FERM 7344 / JCM 9153 / C-125) (Bacillus halodurans).